The chain runs to 88 residues: Alpha-conotoxin GVIIIB (88 aa).

The signal sequence occupies residues 1–20 (MMSKMGAMFVLLLLFTLASS). The propeptide occupies 21–43 (QQEGDVQARKTRPKSDFYRALPR). Thr-87 is subject to Threonine amide.

It belongs to the conotoxin S superfamily. Contains 5 disulfide bonds. In terms of processing, the predominant peptide contains 2 hydroxyprolines, while 2 minor peptides contains 1 and 3 hydroxyprolines. In terms of tissue distribution, expressed by the venom duct.

The protein localises to the secreted. Its function is as follows. Alpha-conotoxins act on postsynaptic membranes, they bind to the nicotinic acetylcholine receptors (nAChR) and thus inhibit them. This toxin shows high activity on alpha-9-alpha-10 (CHRNA9-CHRNA10) (IC(50)=9.79 nM). It also shows weak activity on alpha-3-beta-2 (CHRNA3-CHRNB2) (IC(50)~1 uM), alpha-6/alpha-3-beta-2-beta-3 (CHRNA6/CHRNA3-CHRNB2-CHRNB3) (IC(50)~1 uM). The toxin binds to the same or overlapping binding sites than conotoxin RgIA (AC P0C1D0). This is Alpha-conotoxin GVIIIB from Conus geographus (Geography cone).